A 157-amino-acid polypeptide reads, in one-letter code: Small ribosomal subunit protein uS7 (157 aa).

Belongs to the universal ribosomal protein uS7 family. As to quaternary structure, part of the 30S ribosomal subunit. Contacts proteins S9 and S11.

Its function is as follows. One of the primary rRNA binding proteins, it binds directly to 16S rRNA where it nucleates assembly of the head domain of the 30S subunit. Is located at the subunit interface close to the decoding center, probably blocks exit of the E-site tRNA. The polypeptide is Small ribosomal subunit protein uS7 (Marinomonas sp. (strain MWYL1)).